Consider the following 890-residue polypeptide: Wolframin (890 aa).

Met1 bears the N-acetylmethionine mark. Positions 1–20 (MNSGTPPPSPSGPPPPPAPQ) are enriched in pro residues. The tract at residues 1–83 (MNSGTPPPSP…ETDRAGPMKA (83 aa)) is disordered. The tract at residues 1–323 (MNSGTPPPSP…MHWLSTIVPT (323 aa)) is interaction with ATP6V1A. Position 30 is a phosphothreonine (Thr30). Ser32 bears the Phosphoserine mark. The span at 50–67 (PSAGRSAGEAAAPEPRAP) shows a compositional bias: low complexity. A compositionally biased stretch (basic and acidic residues) spans 71–83 (SREETDRAGPMKA). Ser158 carries the post-translational modification Phosphoserine. The disordered stretch occupies residues 208-227 (VNEQDGGAQPGPVPKSLQKQ). 10 consecutive transmembrane segments (helical) span residues 314–334 (MHWL…FFFI), 340–360 (IDFF…VSMV), 402–422 (NHLE…FSFP), 427–447 (DCIP…TSYM), 465–485 (VAAG…FLKV), 496–516 (GHFI…LFYL), 529–549 (TYCY…SVVI), 563–583 (IGYF…ALMG), 589–609 (RWFL…CGVP), and 632–652 (SSMV…CWFY). At 653-869 (VYRSEGMKVY…HVKIEQDWRS (217 aa)) the chain is on the lumenal side. Asn663 and Asn748 each carry an N-linked (GlcNAc...) asparagine glycan. Residues 870-890 (TVHGALKFAFDFFFFPFLSAA) traverse the membrane as a helical segment.

As to quaternary structure, interacts with ATP6V1A. As to expression, highly expressed in the developing lens.

Its subcellular location is the endoplasmic reticulum membrane. It is found in the cytoplasmic vesicle. The protein localises to the secretory vesicle. Functionally, participates in the regulation of cellular Ca(2+) homeostasis, at least partly, by modulating the filling state of the endoplasmic reticulum Ca(2+) store. Negatively regulates the ER stress response and positively regulates the stability of V-ATPase subunits ATP6V1A and ATP1B1 by preventing their degradation through an unknown proteasome-independent mechanism. This Mus musculus (Mouse) protein is Wolframin (Wfs1).